The chain runs to 415 residues: L-cysteine:1D-myo-inositol 2-amino-2-deoxy-alpha-D-glucopyranoside ligase (415 aa).

Cys43 is a binding site for Zn(2+). Residues 43–46, Thr58, and 81–83 each bind L-cysteinyl-5'-AMP; these read CGIT and NIT. The 'HIGH' region signature appears at 45 to 55; the sequence is ITPYDATHLGH. The short motif at 187 to 192 is the 'ERGGDP' region element; that stretch reads ERGGDP. Trp227 contributes to the L-cysteinyl-5'-AMP binding site. Position 231 (Cys231) interacts with Zn(2+). 249 to 251 contributes to the L-cysteinyl-5'-AMP binding site; sequence GSD. His256 contributes to the Zn(2+) binding site. Ile283 contributes to the L-cysteinyl-5'-AMP binding site. The 'KMSKS' region signature appears at 289–293; sequence KMSKS.

The protein belongs to the class-I aminoacyl-tRNA synthetase family. MshC subfamily. As to quaternary structure, monomer. It depends on Zn(2+) as a cofactor.

It catalyses the reaction 1D-myo-inositol 2-amino-2-deoxy-alpha-D-glucopyranoside + L-cysteine + ATP = 1D-myo-inositol 2-(L-cysteinylamino)-2-deoxy-alpha-D-glucopyranoside + AMP + diphosphate + H(+). In terms of biological role, catalyzes the ATP-dependent condensation of GlcN-Ins and L-cysteine to form L-Cys-GlcN-Ins. The protein is L-cysteine:1D-myo-inositol 2-amino-2-deoxy-alpha-D-glucopyranoside ligase of Mycobacterium sp. (strain JLS).